We begin with the raw amino-acid sequence, 115 residues long: U3-lycotoxin-Ls1c (115 aa).

An N-terminal signal peptide occupies residues M1 to A20. A propeptide spanning residues E21 to R44 is cleaved from the precursor. Intrachain disulfides connect C48/C63, C55/C72, C62/C87, and C74/C85.

Belongs to the neurotoxin 19 (CSTX) family. 01 subfamily. Expressed by the venom gland.

The protein localises to the secreted. In Lycosa singoriensis (Wolf spider), this protein is U3-lycotoxin-Ls1c.